The chain runs to 399 residues: Enolase (399 aa).

(2R)-2-phosphoglycerate is bound at residue glutamine 152. Glutamate 194 (proton donor) is an active-site residue. Residues aspartate 230, glutamate 273, and aspartate 301 each coordinate Mg(2+). (2R)-2-phosphoglycerate-binding residues include lysine 326, arginine 355, serine 356, and lysine 377. Lysine 326 serves as the catalytic Proton acceptor.

Belongs to the enolase family. It depends on Mg(2+) as a cofactor.

It is found in the cytoplasm. The protein resides in the secreted. Its subcellular location is the cell surface. The catalysed reaction is (2R)-2-phosphoglycerate = phosphoenolpyruvate + H2O. It functions in the pathway carbohydrate degradation; glycolysis; pyruvate from D-glyceraldehyde 3-phosphate: step 4/5. Catalyzes the reversible conversion of 2-phosphoglycerate (2-PG) into phosphoenolpyruvate (PEP). It is essential for the degradation of carbohydrates via glycolysis. The protein is Enolase of Methanocorpusculum labreanum (strain ATCC 43576 / DSM 4855 / Z).